The primary structure comprises 143 residues: Pathogenesis-related protein P2 (143 aa).

The N-terminal stretch at 1-23 is a signal peptide; the sequence is MERVNKLCVAFFVINMMMAVAAA. The region spanning 24–143 is the Barwin domain; sequence QSATNVRATY…LNVNYEFVNC (120 aa). Intrachain disulfides connect Cys-52–Cys-84, Cys-73–Cys-107, and Cys-87–Cys-143.

It localises to the secreted. The protein resides in the cell wall. The protein is Pathogenesis-related protein P2 of Solanum lycopersicum (Tomato).